We begin with the raw amino-acid sequence, 149 residues long: Hordoindoline-A (149 aa).

An N-terminal signal peptide occupies residues 1–19 (MKALFLMGLLALVASAAFA). Positions 20-28 (QYGEVVGSY) are excised as a propeptide. A propeptide spans 148 to 149 (YW) (removed in mature form).

Five disulfide bonds are present. As to expression, found in endosperm and aleurone layer of developing kernels, but not in the embryo.

The protein localises to the membrane. The protein resides in the secreted. Its subcellular location is the extracellular space. Functionally, acts as a membranotoxin, probably through its antibacterial and antifungal activities, contributing to the defense mechanism of the plant against predators. Forms monovalent cation-selective ion channels in membranes. Contributes to grain texture and hardness. This is Hordoindoline-A (HINA) from Hordeum vulgare (Barley).